A 187-amino-acid polypeptide reads, in one-letter code: POM121 and ZP3 fusion protein (187 aa).

The tract at residues 166–187 is disordered; the sequence is GTPSHSRRQPRVVSQWSTSASL. The segment covering 177 to 187 has biased composition (polar residues); it reads VVSQWSTSASL.

Expressed in spleen, thymus, pancreas, testis, ovary, small intestine, colon and lymphocytes.

The chain is POM121 and ZP3 fusion protein (POMZP3) from Homo sapiens (Human).